A 605-amino-acid polypeptide reads, in one-letter code: SET domain-containing protein SNOG_11806 (605 aa).

The segment at Thr-68–Val-132 is disordered. The span at Lys-75–Val-89 shows a compositional bias: polar residues. The span at Glu-104–Asp-115 shows a compositional bias: acidic residues. The SET domain occupies Pro-473 to Gly-579.

Belongs to the class V-like SAM-binding methyltransferase superfamily.

This chain is SET domain-containing protein SNOG_11806, found in Phaeosphaeria nodorum (strain SN15 / ATCC MYA-4574 / FGSC 10173) (Glume blotch fungus).